The primary structure comprises 847 residues: DNA ligase (847 aa).

Residues 1-22 show a composition bias toward low complexity; that stretch reads MSDTTTGSDAADAAVPATTPAD. Positions 1-23 are disordered; sequence MSDTTTGSDAADAAVPATTPADL. NAD(+) contacts are provided by residues 54–58, 104–105, and Glu-135; these read DAEYD and SL. Catalysis depends on Lys-137, which acts as the N6-AMP-lysine intermediate. Arg-158, Glu-195, Lys-326, and Lys-350 together coordinate NAD(+). 4 residues coordinate Zn(2+): Cys-444, Cys-447, Cys-463, and Cys-469. The 90-residue stretch at 686–775 folds into the BRCT domain; the sequence is AAGGVLAGLA…PDAIALPEAD (90 aa). The segment at 770–847 is disordered; the sequence is ALPEADPVPD…AEPDGPAETP (78 aa). Low complexity-rich tracts occupy residues 786–807 and 819–833; these read DGGSAEDATAATAGAAEAATAE and PAAAAAAPPTDVEAG.

It belongs to the NAD-dependent DNA ligase family. LigA subfamily. The cofactor is Mg(2+). Requires Mn(2+) as cofactor.

The enzyme catalyses NAD(+) + (deoxyribonucleotide)n-3'-hydroxyl + 5'-phospho-(deoxyribonucleotide)m = (deoxyribonucleotide)n+m + AMP + beta-nicotinamide D-nucleotide.. Functionally, DNA ligase that catalyzes the formation of phosphodiester linkages between 5'-phosphoryl and 3'-hydroxyl groups in double-stranded DNA using NAD as a coenzyme and as the energy source for the reaction. It is essential for DNA replication and repair of damaged DNA. In Clavibacter sepedonicus (Clavibacter michiganensis subsp. sepedonicus), this protein is DNA ligase.